The following is a 483-amino-acid chain: GTPase Der (483 aa).

EngA-type G domains are found at residues 3–167 and 212–387; these read FTLA…GEER and LRIA…EIWN. Residues 9 to 16, 56 to 60, 119 to 122, 218 to 225, 265 to 269, and 330 to 333 contribute to the GTP site; these read GRPNVGKS, DTAGL, NKAE, GRPNAGKS, DTAGM, and NKWD. Residues 388–472 enclose the KH-like domain; it reads RRISTGRLNR…PIRLSLRTSD (85 aa).

It belongs to the TRAFAC class TrmE-Era-EngA-EngB-Septin-like GTPase superfamily. EngA (Der) GTPase family. As to quaternary structure, associates with the 50S ribosomal subunit.

GTPase that plays an essential role in the late steps of ribosome biogenesis. The sequence is that of GTPase Der from Brucella suis biovar 1 (strain 1330).